The primary structure comprises 453 residues: Ethanolamine ammonia-lyase large subunit (453 aa).

Substrate is bound by residues 160-162 (RLQ) and asparagine 193. Adenosylcob(III)alamin contacts are provided by proline 194 and glutamine 246. Residue glutamate 287 coordinates substrate. Serine 295 provides a ligand contact to adenosylcob(III)alamin. Aspartate 362 contacts substrate. Methionine 401 serves as a coordination point for adenosylcob(III)alamin.

The protein belongs to the EutB family. In terms of assembly, the basic unit is a heterodimer which dimerizes to form tetramers. The heterotetramers trimerize; 6 large subunits form a core ring with 6 small subunits projecting outwards. The cofactor is adenosylcob(III)alamin.

It localises to the bacterial microcompartment. The catalysed reaction is ethanolamine = acetaldehyde + NH4(+). It functions in the pathway amine and polyamine degradation; ethanolamine degradation. Catalyzes the deamination of various vicinal amino-alcohols to oxo compounds. Allows this organism to utilize ethanolamine as the sole source of nitrogen and carbon in the presence of vitamin B12. The protein is Ethanolamine ammonia-lyase large subunit of Escherichia coli O157:H7.